A 131-amino-acid chain; its full sequence is Capsid protein (131 aa).

Ca(2+)-binding residues include Q2 and Y131.

This sequence belongs to the Leviviricetes capsid protein family. In terms of assembly, homodimer. The capsid proteins form dimers that assemble by group of 5. Twelve such pentamers are linked together with free dimers. The homodimers binds to the viral RNA via an operator hairpin, but also to many other RNA sequences in the viral genome; this interaction probably shifts the virus from the replicative to the assembly phase and ensures specific encapsidation of the viral genome.

It localises to the virion. In terms of biological role, capsid protein self-assembles to form an icosahedral capsid with a T=3 symmetry, about 26 nm in diameter, and consisting of 89 capsid proteins dimers (178 capsid proteins). Involved in viral genome encapsidation through the interaction between a capsid protein dimer and the multiple packaging signals present in the RNA genome. The capsid also contains 1 copy of the A2 maturation protein. Functionally, acts as a translational repressor of viral replicase synthesis late in infection. This latter function is the result of capsid protein interaction with an RNA hairpin which contains the replicase ribosome-binding site. This chain is Capsid protein, found in Pseudomonas phage PRR1 (Bacteriophage PRR1).